Here is a 229-residue protein sequence, read N- to C-terminus: 7-cyano-7-deazaguanine synthase (229 aa).

9–19 (LSGGLDSATVL) serves as a coordination point for ATP. Positions 188, 198, 201, and 204 each coordinate Zn(2+).

Belongs to the QueC family. Zn(2+) serves as cofactor.

The enzyme catalyses 7-carboxy-7-deazaguanine + NH4(+) + ATP = 7-cyano-7-deazaguanine + ADP + phosphate + H2O + H(+). The protein operates within purine metabolism; 7-cyano-7-deazaguanine biosynthesis. Functionally, catalyzes the ATP-dependent conversion of 7-carboxy-7-deazaguanine (CDG) to 7-cyano-7-deazaguanine (preQ(0)). The polypeptide is 7-cyano-7-deazaguanine synthase (Methylobacillus flagellatus (strain ATCC 51484 / DSM 6875 / VKM B-1610 / KT)).